Reading from the N-terminus, the 149-residue chain is Hut operon positive regulatory protein (149 aa).

The protein belongs to the HutP family. In terms of assembly, homohexamer.

Its function is as follows. Antiterminator that binds to cis-acting regulatory sequences on the mRNA in the presence of histidine, thereby suppressing transcription termination and activating the hut operon for histidine utilization. The protein is Hut operon positive regulatory protein of Geobacillus thermodenitrificans (strain NG80-2).